The chain runs to 86 residues: Small ribosomal subunit protein bS18 (86 aa).

Belongs to the bacterial ribosomal protein bS18 family. In terms of assembly, part of the 30S ribosomal subunit. Forms a tight heterodimer with protein bS6.

Functionally, binds as a heterodimer with protein bS6 to the central domain of the 16S rRNA, where it helps stabilize the platform of the 30S subunit. This Campylobacter curvus (strain 525.92) protein is Small ribosomal subunit protein bS18.